Consider the following 476-residue polypeptide: PRAME family member 5 (476 aa).

An LRR 1; degenerate repeat occupies 97–124 (RWKLQVLDLQDVCENFWMVWSEAMAHGC). An LRR 2; degenerate repeat occupies 179 to 203 (HLCCKKLKILGMPFRNIRSILKMVN). The stretch at 204-230 (LDCIQEVEVNCKWVLPILTQFTPYLGH) is one LRR 3; degenerate repeat. One copy of the LRR 4; degenerate repeat lies at 231-266 (MRNLQKLVLSHMDVSRYVSPEQKKEIVTQFTTQFLK). LRR repeat units follow at residues 267–292 (LCCL…LSCL), 293–324 (KTSL…SQLK), 325–345 (TLDL…QILL), 349–376 (AATL…ALSR), and 377–401 (CFEL…LLSH).

The protein belongs to the PRAME family.

In Homo sapiens (Human), this protein is PRAME family member 5.